A 140-amino-acid chain; its full sequence is Mediator of RNA polymerase II transcription subunit 21 (140 aa).

Positions Glu52 to Gln130 form a coiled coil.

This sequence belongs to the Mediator complex subunit 21 family. In terms of assembly, component of the Mediator complex.

It is found in the nucleus. Its function is as follows. Component of the Mediator complex, a coactivator involved in the regulated transcription of nearly all RNA polymerase II-dependent genes. Mediator functions as a bridge to convey information from gene-specific regulatory proteins to the basal RNA polymerase II transcription machinery. Mediator is recruited to promoters by direct interactions with regulatory proteins and serves as a scaffold for the assembly of a functional preinitiation complex with RNA polymerase II and the general transcription factors. The chain is Mediator of RNA polymerase II transcription subunit 21 (SRB7) from Yarrowia lipolytica (strain CLIB 122 / E 150) (Yeast).